Reading from the N-terminus, the 148-residue chain is Snaclec alboaggregin-D subunit beta (148 aa).

The signal sequence occupies residues 1-23; it reads MGRFISVSFGLLVVFLSLSGAGA. Cysteines 27 and 38 form a disulfide. The region spanning 34–145 is the C-type lectin domain; the sequence is YDLYCYKVFK…CNSTYSFVCK (112 aa). N-linked (GlcNAc...) asparagine glycosylation occurs at N47. Disulfide bonds link C55–C144 and C121–C136. N137 is a glycosylation site (N-linked (GlcNAc...) asparagine).

In terms of assembly, tetramer of heterodimers of alpha and beta subunits (alphabeta)(4); disulfide-linked. In terms of tissue distribution, expressed by the venom gland.

The protein resides in the secreted. Snaclec that induces human platelet aggregation in the absence of any cofactor with the EC(50) of 0.25 nM and causes tyrosine phosphorylation in human platelets. Antibodies against either platelet GPIbalpha (GP1BA) or GPVI (GP6) inhibit alboaggregin D-induced platelet aggregation. Only the combination of these two antibodies completely inhibit aggregation, suggesting that it acts through both GPIbalpha (GP1BA) and GPVI (GP6). The chain is Snaclec alboaggregin-D subunit beta from Trimeresurus albolabris (White-lipped pit viper).